The chain runs to 156 residues: Ribonuclease pancreatic (156 aa).

A signal peptide spans methionine 1–glycine 28. The segment covering alanine 33–serine 43 has biased composition (basic and acidic residues). The tract at residues alanine 33–threonine 52 is disordered. Lysine 35 and arginine 38 together coordinate substrate. Histidine 40 serves as the catalytic Proton acceptor. Intrachain disulfides connect cysteine 54/cysteine 112, cysteine 68/cysteine 123, cysteine 86/cysteine 138, and cysteine 93/cysteine 100. N-linked (GlcNAc...) asparagine glycosylation is present at asparagine 62. Substrate is bound at residue lysine 69–threonine 73. The N-linked (GlcNAc...) asparagine glycan is linked to asparagine 90. The substrate site is built by lysine 94 and arginine 113. Asparagine 116 carries N-linked (GlcNAc...) asparagine glycosylation. Histidine 147 acts as the Proton donor in catalysis.

This sequence belongs to the pancreatic ribonuclease family. In terms of assembly, monomer. Interacts with and forms tight 1:1 complexes with RNH1. Dimerization of two such complexes may occur. Interaction with RNH1 inhibits this protein.

It localises to the secreted. The catalysed reaction is an [RNA] containing cytidine + H2O = an [RNA]-3'-cytidine-3'-phosphate + a 5'-hydroxy-ribonucleotide-3'-[RNA].. The enzyme catalyses an [RNA] containing uridine + H2O = an [RNA]-3'-uridine-3'-phosphate + a 5'-hydroxy-ribonucleotide-3'-[RNA].. Endonuclease that catalyzes the cleavage of RNA on the 3' side of pyrimidine nucleotides. Acts on single-stranded and double-stranded RNA. The protein is Ribonuclease pancreatic (RNASE1) of Ateles geoffroyi (Black-handed spider monkey).